A 308-amino-acid chain; its full sequence is Membrane protein insertase YidC 1 (308 aa).

The N-terminal stretch at Met1–Gly22 is a signal peptide. A lipid anchor (N-palmitoyl cysteine) is attached at Cys23. Cys23 carries S-diacylglycerol cysteine lipidation. 5 helical membrane passes run Phe60–Ile80, Phe135–Phe155, Tyr168–Tyr188, Met211–Ser226, and Leu232–Val252. The disordered stretch occupies residues Glu263–Arg308. The span at Ser293–Arg308 shows a compositional bias: basic residues.

This sequence belongs to the OXA1/ALB3/YidC family. Type 2 subfamily.

The protein resides in the cell membrane. Functionally, required for the insertion and/or proper folding and/or complex formation of integral membrane proteins into the membrane. Involved in integration of membrane proteins that insert both dependently and independently of the Sec translocase complex, as well as at least some lipoproteins. In Streptococcus pneumoniae serotype 4 (strain ATCC BAA-334 / TIGR4), this protein is Membrane protein insertase YidC 1.